Reading from the N-terminus, the 562-residue chain is ATP synthase subunit beta, mitochondrial (562 aa).

2 stretches are compositionally biased toward low complexity: residues 1–13 (MASR…LLRS) and 20–40 (SKSP…SSKS). 2 disordered regions span residues 1 to 43 (MASR…SRAS) and 58 to 83 (SAAA…KITD). Residues 1–55 (MASRRLLSSLLRSSSRRSVSKSPISNINPKLSSSSPSSKSRASPYGYLLTRAAEY) constitute a mitochondrion transit peptide. Residue 237–244 (GGAGVGKT) coordinates ATP.

Belongs to the ATPase alpha/beta chains family. F-type ATPases have 2 components, CF(1) - the catalytic core - and CF(0) - the membrane proton channel. CF(1) has five subunits: alpha(3), beta(3), gamma(1), delta(1), epsilon(1). CF(0) has three main subunits: a, b and c.

It localises to the mitochondrion. It is found in the mitochondrion inner membrane. The catalysed reaction is ATP + H2O + 4 H(+)(in) = ADP + phosphate + 5 H(+)(out). Mitochondrial membrane ATP synthase (F(1)F(0) ATP synthase or Complex V) produces ATP from ADP in the presence of a proton gradient across the membrane which is generated by electron transport complexes of the respiratory chain. F-type ATPases consist of two structural domains, F(1) - containing the extramembraneous catalytic core, and F(0) - containing the membrane proton channel, linked together by a central stalk and a peripheral stalk. During catalysis, ATP synthesis in the catalytic domain of F(1) is coupled via a rotary mechanism of the central stalk subunits to proton translocation. Subunits alpha and beta form the catalytic core in F(1). Rotation of the central stalk against the surrounding alpha(3)beta(3) subunits leads to hydrolysis of ATP in three separate catalytic sites on the beta subunits. This chain is ATP synthase subunit beta, mitochondrial (ATPB), found in Hevea brasiliensis (Para rubber tree).